The following is a 218-amino-acid chain: MRTMNLAGMIDHTFLKPEATEKDIVNLCHEAKQHKFATVCINPAYICTAAKLLHGSGVGVATVIGFPLGATMTEIKVQEIFAAKAHGAREVDIVINIGWAKSGNWEAVAKDITRAVEAAHCCGVTIKVIIETSLLTEEEKQKAAEIVKASGADYIKTSTGFAGGGATVEDVRNLKAWVGQSVKVKASGGIRSRETALQMVEAGADRLGTSSGVQIITV.

The Proton donor/acceptor role is filled by aspartate 92. The active-site Schiff-base intermediate with acetaldehyde is lysine 156. Lysine 185 acts as the Proton donor/acceptor in catalysis.

This sequence belongs to the DeoC/FbaB aldolase family. DeoC type 1 subfamily.

It localises to the cytoplasm. It catalyses the reaction 2-deoxy-D-ribose 5-phosphate = D-glyceraldehyde 3-phosphate + acetaldehyde. Its pathway is carbohydrate degradation; 2-deoxy-D-ribose 1-phosphate degradation; D-glyceraldehyde 3-phosphate and acetaldehyde from 2-deoxy-alpha-D-ribose 1-phosphate: step 2/2. Its function is as follows. Catalyzes a reversible aldol reaction between acetaldehyde and D-glyceraldehyde 3-phosphate to generate 2-deoxy-D-ribose 5-phosphate. The polypeptide is Deoxyribose-phosphate aldolase (Desulfitobacterium hafniense (strain Y51)).